Here is a 558-residue protein sequence, read N- to C-terminus: Membrane protein insertase YidC (558 aa).

6 helical membrane-spanning segments follow: residues 5-25 (IINL…WQYF), 332-352 (AIDF…MNFF), 355-375 (YVGN…LLMF), 429-449 (LPIL…YVTI), 474-494 (LFGL…WPIL), and 520-540 (FMPL…LIYW).

It belongs to the OXA1/ALB3/YidC family. Type 1 subfamily. Interacts with the Sec translocase complex via SecD. Specifically interacts with transmembrane segments of nascent integral membrane proteins during membrane integration.

It is found in the cell inner membrane. Its function is as follows. Required for the insertion and/or proper folding and/or complex formation of integral membrane proteins into the membrane. Involved in integration of membrane proteins that insert both dependently and independently of the Sec translocase complex, as well as at least some lipoproteins. Aids folding of multispanning membrane proteins. The protein is Membrane protein insertase YidC of Rickettsia typhi (strain ATCC VR-144 / Wilmington).